Consider the following 379-residue polypeptide: MKILRKNHPLLKIINHSFIDLPTPSNISSWWNFGSLLGMCLVIQILTGLFLAMHYTSDTTTAFSSVAHICRDVNYGWLIRYLHANGASMFFICLFIHVGRGIYYGSYVLSETWNIGIILFLTTMATAFVGYVLPWGQMSFWGATVITNLLSAIPYIGSTLVEWIWGGFSVDKATLTRFFAFHFILPFIIAAFALVHLLFLHETGSNNPSGLNSDSDKIPFHPYYTTKDLLGIFLLLLVLMILALFFPDILGDPDNFTPANPLNTPAHIKPEWYFLFAYAILRSIPNKLGGVLALVLSILILAAFPLLNISKQHGLIFRPVTQIIYWIFIANLLVLTWIGGQPVEYPFTTIGQIASITYFTIIIILIPVSNTIENNIIKL.

The next 4 helical transmembrane spans lie at 33–53, 77–98, 113–133, and 178–198; these read FGSL…FLAM, WLIR…FIHV, WNIG…GYVL, and FFAF…VHLL. 2 residues coordinate heme b: His83 and His97. Residues His182 and His196 each contribute to the heme b site. Residue His201 coordinates a ubiquinone. 4 consecutive transmembrane segments (helical) span residues 226 to 246, 288 to 308, 320 to 340, and 347 to 367; these read TKDL…ALFF, LGGV…PLLN, VTQI…WIGG, and FTTI…ILIP.

The protein belongs to the cytochrome b family. As to quaternary structure, the cytochrome bc1 complex contains 11 subunits: 3 respiratory subunits (MT-CYB, CYC1 and UQCRFS1), 2 core proteins (UQCRC1 and UQCRC2) and 6 low-molecular weight proteins (UQCRH/QCR6, UQCRB/QCR7, UQCRQ/QCR8, UQCR10/QCR9, UQCR11/QCR10 and a cleavage product of UQCRFS1). This cytochrome bc1 complex then forms a dimer. The cofactor is heme b.

Its subcellular location is the mitochondrion inner membrane. Functionally, component of the ubiquinol-cytochrome c reductase complex (complex III or cytochrome b-c1 complex) that is part of the mitochondrial respiratory chain. The b-c1 complex mediates electron transfer from ubiquinol to cytochrome c. Contributes to the generation of a proton gradient across the mitochondrial membrane that is then used for ATP synthesis. This is Cytochrome b (MT-CYB) from Akodon reigi (Reig's grass mouse).